The following is a 480-amino-acid chain: uncharacterized protein (480 aa).

Residue Lys222 is modified to N6-(pyridoxal phosphate)lysine.

Belongs to the Orn/Lys/Arg decarboxylase class-I family. Pyridoxal 5'-phosphate is required as a cofactor.

This is an uncharacterized protein from Bacillus subtilis (strain 168).